The following is a 572-amino-acid chain: Far upstream element-binding protein 3 (572 aa).

A2 bears the N-acetylalanine mark. Residues K15 and K57 each participate in a glycyl lysine isopeptide (Lys-Gly) (interchain with G-Cter in SUMO2) cross-link. T76 carries the phosphothreonine modification. 4 consecutive KH domains span residues 77–141 (VITE…KRLL), 162–228 (STIQ…REMV), 253–317 (GGSI…AHII), and 354–421 (VQEI…RQLI). Residue S296 is modified to Phosphoserine. The tract at residues 426-521 (GGTNLGAPGA…SQPNYSKAWE (96 aa)) is disordered. A compositionally biased stretch (low complexity) spans 496-514 (QQPTQQVPSQQSQPQSSQP). Phosphoserine is present on residues S539 and S569.

As to expression, detected in a number of cell lines.

Its subcellular location is the nucleus. Functionally, may interact with single-stranded DNA from the far-upstream element (FUSE). May activate gene expression. This is Far upstream element-binding protein 3 (FUBP3) from Homo sapiens (Human).